A 224-amino-acid chain; its full sequence is Charged multivesicular body protein 3 (224 aa).

The N-myristoyl glycine moiety is linked to residue Gly-2. The interval 2-113 (GLFGKTQEKP…LQKSTEVMKA (112 aa)) is intramolecular interaction with C-terminus. Positions 22-54 (KIRKEMRVVDRQIRDIQREEEKVKRSVKDAAKK) form a coiled coil. Important for autoinhibitory function stretches follow at residues 59–64 (VCVVLA) and 168–169 (IL). A coiled-coil region spans residues 149 to 224 (ESMDDQEEME…MQSRLATLRS (76 aa)). The interval 151 to 222 (MDDQEEMEEA…EAMQSRLATL (72 aa)) is intramolecular interaction with N-terminus. The tract at residues 151–224 (MDDQEEMEEA…MQSRLATLRS (74 aa)) is interaction with VPS4A. Lys-179 is covalently cross-linked (Glycyl lysine isopeptide (Lys-Gly) (interchain with G-Cter in ubiquitin)). Residues 180 to 224 (APSKVTDALPEPEPAGAMAASEEGEEEEDEEDLEAMQSRLATLRS) form a disordered region. 3 interaction with STAMBP regions span residues 196–224 (AMAASEEGEEEEDEEDLEAMQSRLATLRS), 205–209 (EEEDE), and 223–224 (RS). Ser-200 carries the post-translational modification Phosphoserine. The MIT-interacting motif signature appears at 201–213 (EEGEEEEDEEDLE). Positions 201–213 (EEGEEEEDEEDLE) are enriched in acidic residues.

This sequence belongs to the SNF7 family. Probable core component of the endosomal sorting required for transport complex III (ESCRT-III). ESCRT-III components are thought to multimerize to form a flat lattice on the perimeter membrane of the endosome. Several assembly forms of ESCRT-III may exist that interact and act sequentially. Forms a metastable monomer in solution; its core structure (without part of the putative autoinhibitory C-terminal acidic region) oligomerizes into a flat lattice via two different dimerization interfaces. In vitro, heteromerizes with CHMP2A (but not CHMP4) to form helical tubular structures that expose membrane-interacting sites on the outside whereas VPS4B can associate on the inside of the tubule. May interact with IGFBP7; the relevance of such interaction however remains unclear. Interacts with CHMP2A. Interacts with CHMP4A; the interaction requires the release of CHMP4A autoinhibition. Interacts with VPS4A. Interacts with STAMBP; the interaction appears to relieve the autoinhibition of CHMP3. Interacts with VTA1. Expressed in lung, testis, heart, spleen, skeletal muscle, kidney, liver and brain.

The protein resides in the cytoplasm. The protein localises to the cytosol. It is found in the membrane. Its subcellular location is the endosome. It localises to the late endosome membrane. Functionally, probable core component of the endosomal sorting required for transport complex III (ESCRT-III) which is involved in multivesicular bodies (MVBs) formation and sorting of endosomal cargo proteins into MVBs. MVBs contain intraluminal vesicles (ILVs) that are generated by invagination and scission from the limiting membrane of the endosome and mostly are delivered to lysosomes enabling degradation of membrane proteins, such as stimulated growth factor receptors, lysosomal enzymes and lipids. The MVB pathway appears to require the sequential function of ESCRT-O, -I,-II and -III complexes. ESCRT-III proteins mostly dissociate from the invaginating membrane before the ILV is released. The ESCRT machinery also functions in topologically equivalent membrane fission events, such as the terminal stages of cytokinesis. ESCRT-III proteins are believed to mediate the necessary vesicle extrusion and/or membrane fission activities, possibly in conjunction with the AAA ATPase VPS4. Selectively binds to phosphatidylinositol 3,5-bisphosphate PtdIns(3,5)P2 and PtdIns(3,4)P2 in preference to other phosphoinositides tested. Involved in late stages of cytokinesis. Plays a role in endosomal sorting/trafficking of EGF receptor. The chain is Charged multivesicular body protein 3 (Chmp3) from Mus musculus (Mouse).